We begin with the raw amino-acid sequence, 254 residues long: Alcohol dehydrogenase (254 aa).

10–33 (FVAGLGGIGLDTSREIVKSGPKNL) lines the NAD(+) pocket. Ser-138 provides a ligand contact to substrate. Tyr-151 functions as the Proton acceptor in the catalytic mechanism.

It belongs to the short-chain dehydrogenases/reductases (SDR) family. As to quaternary structure, homodimer.

It catalyses the reaction a primary alcohol + NAD(+) = an aldehyde + NADH + H(+). The catalysed reaction is a secondary alcohol + NAD(+) = a ketone + NADH + H(+). The polypeptide is Alcohol dehydrogenase (Adh) (Drosophila differens (Fruit fly)).